We begin with the raw amino-acid sequence, 1092 residues long: Neural cell adhesion molecule 1-B (1092 aa).

An N-terminal signal peptide occupies residues 1 to 19; the sequence is MLHIKDLIWTLYFIGAAVA. 5 consecutive Ig-like C2-type domains span residues 20 to 108, 113 to 202, 208 to 295, 303 to 397, and 400 to 489; these read LEVN…GTVN, QKLT…KDIQ, PPLI…EAIV, PKMT…FEVQ, and PKIR…FILV. The Extracellular segment spans residues 20 to 705; it reads LEVNIVPDQG…ATSASTGLGT (686 aa). Cystine bridges form between cysteine 41/cysteine 93 and cysteine 136/cysteine 186. The N-linked (GlcNAc...) asparagine glycan is linked to asparagine 82. Residues 149 to 153 and 158 to 162 contribute to the heparin site; these read RHKGK and KKDVR. Asparagine 219 is a glycosylation site (N-linked (GlcNAc...) asparagine). Residues cysteine 232 and cysteine 282 are joined by a disulfide bond. 5 N-linked (GlcNAc...) asparagine glycosylation sites follow: asparagine 310, asparagine 341, asparagine 417, asparagine 443, and asparagine 472. Cysteine 323 and cysteine 379 are disulfide-bonded. Cysteines 420 and 473 form a disulfide. 2 consecutive Fibronectin type-III domains span residues 493 to 592 and 595 to 691; these read TPSS…TQPV and EPSA…TAKP. Residues 706-723 form a helical membrane-spanning segment; it reads GAIVGILIVTFVLLLVVV. The Cytoplasmic segment spans residues 724–1092; it reads DVTCFFLNKC…TQRNVNESKA (369 aa). The span at 754–784 shows a compositional bias: basic and acidic residues; it reads KDIEEGKAAFSKDESKEPIVEVRTEEERTPN. 2 disordered regions span residues 754–1005 and 1024–1092; these read KDIE…GGTF and TPAA…ESKA. 2 stretches are compositionally biased toward low complexity: residues 820–832 and 839–851; these read TTVTTNSDTITET and SPTSETTTLTSST. A compositionally biased stretch (polar residues) spans 860–871; the sequence is DSNTVQSVQATP. Residues 917-929 are compositionally biased toward low complexity; that stretch reads PSAATSAAEPPTA. The segment covering 968 to 978 has biased composition (polar residues); the sequence is AQPSTVKSPTE. Over residues 1050 to 1068 the composition is skewed to basic and acidic residues; sequence AKTEKTQVEENSKPEETDV. The segment covering 1080–1092 has biased composition (polar residues); the sequence is NEATQRNVNESKA.

In terms of processing, polysialylated by ST8SIA2 and ST8SIA4. Polysialylation modulates cell interactions by confering both attractive and repulsive properties that are highly regulated by ST8SIA2 and ST8SIA4. Polysialylation is formed on a-2,3-linked sialic acid of core glycans.

The protein localises to the cell membrane. Its function is as follows. This protein is a cell adhesion molecule involved in neuron-neuron adhesion, neurite fasciculation, outgrowth of neurites, etc. This chain is Neural cell adhesion molecule 1-B, found in Xenopus laevis (African clawed frog).